A 90-amino-acid polypeptide reads, in one-letter code: Co-chaperonin GroES (90 aa).

The protein belongs to the GroES chaperonin family. As to quaternary structure, heptamer of 7 subunits arranged in a ring. Interacts with the chaperonin GroEL.

It localises to the cytoplasm. In terms of biological role, together with the chaperonin GroEL, plays an essential role in assisting protein folding. The GroEL-GroES system forms a nano-cage that allows encapsulation of the non-native substrate proteins and provides a physical environment optimized to promote and accelerate protein folding. GroES binds to the apical surface of the GroEL ring, thereby capping the opening of the GroEL channel. The polypeptide is Co-chaperonin GroES (Borreliella afzelii (strain PKo) (Borrelia afzelii)).